Reading from the N-terminus, the 213-residue chain is Uracil phosphoribosyltransferase (213 aa).

Residues arginine 78, arginine 103, and 131–139 each bind 5-phospho-alpha-D-ribose 1-diphosphate; that span reads DPMLATGGT. Uracil contacts are provided by residues isoleucine 197 and 202 to 204; that span reads GDA. Aspartate 203 provides a ligand contact to 5-phospho-alpha-D-ribose 1-diphosphate.

It belongs to the UPRTase family. It depends on Mg(2+) as a cofactor.

The catalysed reaction is UMP + diphosphate = 5-phospho-alpha-D-ribose 1-diphosphate + uracil. Its pathway is pyrimidine metabolism; UMP biosynthesis via salvage pathway; UMP from uracil: step 1/1. With respect to regulation, allosterically activated by GTP. Functionally, catalyzes the conversion of uracil and 5-phospho-alpha-D-ribose 1-diphosphate (PRPP) to UMP and diphosphate. This chain is Uracil phosphoribosyltransferase, found in Bifidobacterium longum (strain DJO10A).